The following is a 153-amino-acid chain: UPF0756 membrane protein lwe1581 (153 aa).

4 consecutive transmembrane segments (helical) span residues 6-26, 54-74, 80-100, and 117-137; these read MLFL…SLII, WGVT…QIGF, SFKS…SILA, and LVFG…GPVI.

It belongs to the UPF0756 family.

The protein localises to the cell membrane. The chain is UPF0756 membrane protein lwe1581 from Listeria welshimeri serovar 6b (strain ATCC 35897 / DSM 20650 / CCUG 15529 / CIP 8149 / NCTC 11857 / SLCC 5334 / V8).